The following is a 273-amino-acid chain: MAIVKCKPTSPGRRHVVKVVNPELHKGKPFAPLVEKNSKSGGRNNNGRITTRHIGGGHKQAYRIVDFKRNKDGIPAVVERLEYDPNRSANIALVLYKDGERRYILAPKGLKAGDQIQSGVDAAIKAGNTLPMRNIPVGSTVHNVEMKPGKGGQLARSAGTYVQIVARDGSYVTLRLRSGEMRKVESDCRATLGEVGNAEHMLRVLGKAGAARWRGIRPTVRGTAMNPVDHPHGGGEGRNFGKHPVSPWGLQTKGKKTRSNKRTDKFIVRRRTK.

2 disordered regions span residues 28 to 53 (KPFAPLVEKNSKSGGRNNNGRITTRH) and 221 to 273 (RGTA…RRTK). Residues 39–48 (KSGGRNNNGR) are compositionally biased toward low complexity.

It belongs to the universal ribosomal protein uL2 family. In terms of assembly, part of the 50S ribosomal subunit. Forms a bridge to the 30S subunit in the 70S ribosome.

One of the primary rRNA binding proteins. Required for association of the 30S and 50S subunits to form the 70S ribosome, for tRNA binding and peptide bond formation. It has been suggested to have peptidyltransferase activity; this is somewhat controversial. Makes several contacts with the 16S rRNA in the 70S ribosome. The protein is Large ribosomal subunit protein uL2 of Pectobacterium atrosepticum (strain SCRI 1043 / ATCC BAA-672) (Erwinia carotovora subsp. atroseptica).